Here is a 630-residue protein sequence, read N- to C-terminus: Sodium-dependent serotonin transporter (630 aa).

At Met-1–Asp-87 the chain is on the cytoplasmic side. Tyr-47 is modified (phosphotyrosine). Residues Phe-88–Asn-112 form a helical membrane-spanning segment. Positions 94, 96, 97, 98, and 101 each coordinate Na(+). Asp-98 provides a ligand contact to serotonin. The Extracellular portion of the chain corresponds to Gly-113–Gly-115. Residues Ala-116–Met-135 traverse the membrane as a helical segment. Residues Glu-136–Gly-160 lie on the Cytoplasmic side of the membrane. Tyr-142 is subject to Phosphotyrosine. The chain crosses the membrane as a helical span at residues Ile-161 to Tyr-186. Residues Leu-187–Ser-252 are Extracellular-facing. Cys-200 and Cys-209 form a disulfide bridge. N-linked (GlcNAc...) asparagine glycans are attached at residues Asn-208 and Asn-217. A helical transmembrane segment spans residues Trp-253–Trp-271. Residues Lys-272–Ser-277 are Cytoplasmic-facing. Position 276 is a phosphothreonine (Thr-276). The helical transmembrane segment at Gly-278 to Val-297 threads the bilayer. The Extracellular portion of the chain corresponds to Arg-298 to Gly-324. The helical transmembrane segment at Val-325–Phe-347 threads the bilayer. Ser-336 contacts Na(+). At Ala-348 to Asp-360 the chain is on the cytoplasmic side. The chain crosses the membrane as a helical span at residues Ala-361–Phe-380. Residue Asn-368 coordinates Na(+). The Extracellular portion of the chain corresponds to Thr-381 to Thr-421. Residues Phe-422–Leu-443 form a helical membrane-spanning segment. Na(+) is bound by residues Leu-434, Asp-437, and Ser-438. Thr-439 serves as a coordination point for serotonin. Over Glu-444–Glu-463 the chain is Cytoplasmic. A helical transmembrane segment spans residues Trp-464–Phe-483. The Extracellular portion of the chain corresponds to Gly-484–Glu-494. Residues Glu-494 and Tyr-495 each contribute to the serotonin site. Residues Tyr-495 to Tyr-516 traverse the membrane as a helical segment. The Cytoplasmic segment spans residues Gly-517–Arg-538. A helical transmembrane segment spans residues Ile-539 to Met-558. Serotonin contacts are provided by Phe-556 and Ser-559. Over Ser-559–Ser-574 the chain is Extracellular. Residues Val-575 to Tyr-595 traverse the membrane as a helical segment. The Cytoplasmic segment spans residues Arg-596–Val-630. The interval Thr-616–Asp-624 is interaction with RAB4A.

Belongs to the sodium:neurotransmitter symporter (SNF) (TC 2.A.22) family. SLC6A4 subfamily. As to quaternary structure, monomer or homooligomer. Interacts (via C-terminus) with SCAMP2; the interaction is direct and retains transporter molecules intracellularly. Interacts with filamentous actin and STX1A. Interacts (via the N-terminus) with STX1A (via the H3 domain); this interaction regulates SLC4A6 channel conductance. Interacts with SEC23A, SEC24C and PATJ. Interacts with NOS1; the interaction may diminish the cell surface localization of SERT in the brain and, correspondingly, reduce serotonin reuptake. Interacts with TGFB1I1. Interacts with ITGAV:ITGB3. Interacts (via C-terminus) with ITGB3; this interaction regulates SLC6A4 trafficking. Phosphorylation at Thr-276 increases 5-HT uptake and is required for cGMP-mediated SERT regulation. As to expression, expressed in the intestinal crypt epithelial cells (at protein level).

It localises to the cell membrane. The protein resides in the endomembrane system. Its subcellular location is the endosome membrane. The protein localises to the synapse. It is found in the cell junction. It localises to the focal adhesion. The protein resides in the cell projection. Its subcellular location is the neuron projection. The catalysed reaction is serotonin(out) + K(+)(in) + Na(+)(out) + H(+)(in) = serotonin(in) + K(+)(out) + Na(+)(in) + H(+)(out). Functionally, serotonin transporter that cotransports serotonin with one Na(+) ion in exchange for one K(+) ion and possibly one proton in an overall electroneutral transport cycle. Transports serotonin across the plasma membrane from the extracellular compartment to the cytosol thus limiting serotonin intercellular signaling. Essential for serotonin homeostasis in the central nervous system. In the developing somatosensory cortex, acts in glutamatergic neurons to control serotonin uptake and its trophic functions accounting for proper spatial organization of cortical neurons and elaboration of sensory circuits. In the mature cortex, acts primarily in brainstem raphe neurons to mediate serotonin uptake from the synaptic cleft back into the pre-synaptic terminal thus terminating serotonin signaling at the synapse. Modulates mucosal serotonin levels in the gastrointestinal tract through uptake and clearance of serotonin in enterocytes. Required for enteric neurogenesis and gastrointestinal reflexes. Regulates blood serotonin levels by ensuring rapid high affinity uptake of serotonin from plasma to platelets, where it is further stored in dense granules via vesicular monoamine transporters and then released upon stimulation. Mechanistically, the transport cycle starts with an outward-open conformation having Na1(+) and Cl(-) sites occupied. The binding of a second extracellular Na2(+) ion and serotonin substrate leads to structural changes to outward-occluded to inward-occluded to inward-open, where the Na2(+) ion and serotonin are released into the cytosol. Binding of intracellular K(+) ion induces conformational transitions to inward-occluded to outward-open and completes the cycle by releasing K(+) possibly together with a proton bound to Asp-98 into the extracellular compartment. Na1(+) and Cl(-) ions remain bound throughout the transport cycle. Additionally, displays serotonin-induced channel-like conductance for monovalent cations, mainly Na(+) ions. The channel activity is uncoupled from the transport cycle and may contribute to the membrane resting potential or excitability. This is Sodium-dependent serotonin transporter (SLC6A4) from Cavia porcellus (Guinea pig).